The following is a 269-amino-acid chain: Protein MrkE (269 aa).

A Response regulatory domain is found at Lys-59 to Thr-173. Residue Asp-110 is modified to 4-aspartylphosphate. Residues Ile-197 to Phe-269 form the HTH LytTR-type domain.

Its function is as follows. May be involved in the regulation of fimbrial expression. The chain is Protein MrkE (mrkE) from Klebsiella pneumoniae.